We begin with the raw amino-acid sequence, 121 residues long: Putative iron-sulfur cluster insertion protein ErpA (121 aa).

C49, C113, and C115 together coordinate iron-sulfur cluster.

The protein belongs to the HesB/IscA family. As to quaternary structure, homodimer. It depends on iron-sulfur cluster as a cofactor.

Functionally, required for insertion of 4Fe-4S clusters. The chain is Putative iron-sulfur cluster insertion protein ErpA from Verminephrobacter eiseniae (strain EF01-2).